The chain runs to 309 residues: Elongation factor Ts (309 aa).

Residues 82–85 (TDFV) form an involved in Mg(2+) ion dislocation from EF-Tu region.

The protein belongs to the EF-Ts family.

It is found in the cytoplasm. Associates with the EF-Tu.GDP complex and induces the exchange of GDP to GTP. It remains bound to the aminoacyl-tRNA.EF-Tu.GTP complex up to the GTP hydrolysis stage on the ribosome. This chain is Elongation factor Ts, found in Rickettsia peacockii (strain Rustic).